The following is an 85-amino-acid chain: MFSWLKGRRSKDTLKDRLELVLAYDRAQIPPGKVDALRNDLLEVVKRYFPAGSSNVEVEQRGDQVVLMASIALDEGIENPGRRER.

The protein belongs to the MinE family.

In terms of biological role, prevents the cell division inhibition by proteins MinC and MinD at internal division sites while permitting inhibition at polar sites. This ensures cell division at the proper site by restricting the formation of a division septum at the midpoint of the long axis of the cell. The chain is Cell division topological specificity factor from Deinococcus geothermalis (strain DSM 11300 / CIP 105573 / AG-3a).